The chain runs to 374 residues: MSFFTNLRRVNKVYPDSASFIVDNRLLLNTTPAGFTNVLNVPSTRNLGNGRFEPGYNLSNNQFVSAGDINRITRSNDVPRIRGVFQGISDPQIGSLNQLRRVDNVPDANLHVKRTRGDAVKQSFPETNVRSAEGVDRALQQNPRLNTYLQGAKAAGVGVLLAGGAYLTFSAATLVQDIIRALNNTGGSYYVRGSDGGETADACLLLHRTCQRDPNMNTSEVAICANDPLVSNTAQLQAICSGFNYEQEQTVCRQSDPAADPDSPQFVDVSDLLPGQTIMCIEPYSLGDLIGDLGLDHLLGEEGLVGKSSNSSDSVSNKLMPLIWLIGAVLFLALVVYLIYRFLIKGGGSSTTNAPPVVIVPPPATTNLNPQQQI.

Residues 155 to 175 form a helical membrane-spanning segment; sequence AGVGVLLAGGAYLTFSAATLV. A glycan (N-linked (GlcNAc...) asparagine; by host) is linked at asparagine 183. A helical membrane pass occupies residues 319–339; that stretch reads LMPLIWLIGAVLFLALVVYLI. The disordered stretch occupies residues 355–374; the sequence is PPVVIVPPPATTNLNPQQQI.

The protein belongs to the baculoviridae E56 family.

Its subcellular location is the virion membrane. In terms of biological role, structural protein that is specific for occlusion-derived virus (ODV) envelopes but not of budded virus (BV). This is Occlusion-derived virus envelope protein E56 (ODVP6E) from Orgyia pseudotsugata (Douglas-fir tussock moth).